A 204-amino-acid polypeptide reads, in one-letter code: Thymidylate kinase (204 aa).

9–16 (GLDGAGKS) is a binding site for ATP.

This sequence belongs to the thymidylate kinase family.

It carries out the reaction dTMP + ATP = dTDP + ADP. In terms of biological role, phosphorylation of dTMP to form dTDP in both de novo and salvage pathways of dTTP synthesis. The chain is Thymidylate kinase from Francisella philomiragia subsp. philomiragia (strain ATCC 25017 / CCUG 19701 / FSC 153 / O#319-036).